Reading from the N-terminus, the 432-residue chain is MKFTLVATVLLTFSLSAFAVEYPVLTTASPDQVGFDSQKLHRLDGWIQNQIDAGYPSINLLVIKDNHIVLQKAWGYAKKYDGSTLLAHPIRATTNTMYDLASNTKMYATNFALQKLVYEGKIDVNDLVSKYIPGFKDMPGDKIKGKNKLRIIDILHHVAGFPADPQYPNKNVAGKLFSQSKSTTLEMIKKTPLEYQPGSKHIYSDVDYMILGFIIESITAMPLDRYVETTIYKPLGLKHTVFNPLMKGFTPPQIAATELHGNTRDGVIHFPNIRTNTLWGQVHDEKAWYSMGGVSGHAGLFSDTHDMAVLMQVMLNGGGYGNVKLFDDKTVAQFTRRSPEDATFGLGWRVNGNASMTPTFGVLASPQTYGHTGWTGTLTSIDPVNHMAIVILGNRPHSPVANPKVNPNVFVSGLLPAATYGWIVDQIYGSLK.

The chain crosses the membrane as a helical; Signal-anchor span at residues 7–25 (ATVLLTFSLSAFAVEYPVL).

It belongs to the peptidase S12 family. YfeW subfamily.

It is found in the cell inner membrane. It carries out the reaction Preferential cleavage: (Ac)2-L-Lys-D-Ala-|-D-Ala. Also transpeptidation of peptidyl-alanyl moieties that are N-acyl substituents of D-alanine.. In Salmonella typhimurium (strain LT2 / SGSC1412 / ATCC 700720), this protein is Putative D-alanyl-D-alanine carboxypeptidase.